The chain runs to 145 residues: Phosphoribosyl-AMP cyclohydrolase (145 aa).

Asp-87 is a Mg(2+) binding site. Cys-88 is a binding site for Zn(2+). Mg(2+) is bound by residues Asp-89 and Asp-91. Residues Cys-104 and Cys-111 each contribute to the Zn(2+) site.

The protein belongs to the PRA-CH family. In terms of assembly, homodimer. Mg(2+) serves as cofactor. It depends on Zn(2+) as a cofactor.

Its subcellular location is the cytoplasm. It catalyses the reaction 1-(5-phospho-beta-D-ribosyl)-5'-AMP + H2O = 1-(5-phospho-beta-D-ribosyl)-5-[(5-phospho-beta-D-ribosylamino)methylideneamino]imidazole-4-carboxamide. It participates in amino-acid biosynthesis; L-histidine biosynthesis; L-histidine from 5-phospho-alpha-D-ribose 1-diphosphate: step 3/9. Functionally, catalyzes the hydrolysis of the adenine ring of phosphoribosyl-AMP. The sequence is that of Phosphoribosyl-AMP cyclohydrolase from Nitrobacter winogradskyi (strain ATCC 25391 / DSM 10237 / CIP 104748 / NCIMB 11846 / Nb-255).